Here is a 795-residue protein sequence, read N- to C-terminus: Phenylalanine--tRNA ligase beta subunit (795 aa).

A tRNA-binding domain is found at 39–148 (AGDFSGVVVG…QNAPVGTNLR (110 aa)). Positions 401–476 (PKLNQVSLRR…RIYGYNSIPN (76 aa)) constitute a B5 domain. Aspartate 454, aspartate 460, glutamate 463, and glutamate 464 together coordinate Mg(2+). The FDX-ACB domain maps to 701–794 (SRFPANRRDL…LKQRFNAYLR (94 aa)).

This sequence belongs to the phenylalanyl-tRNA synthetase beta subunit family. Type 1 subfamily. In terms of assembly, tetramer of two alpha and two beta subunits. The cofactor is Mg(2+).

Its subcellular location is the cytoplasm. The enzyme catalyses tRNA(Phe) + L-phenylalanine + ATP = L-phenylalanyl-tRNA(Phe) + AMP + diphosphate + H(+). The polypeptide is Phenylalanine--tRNA ligase beta subunit (pheT) (Pasteurella multocida (strain Pm70)).